A 198-amino-acid chain; its full sequence is DNA damage response protein D (198 aa).

Residues Ser124–Ala198 form a disordered region. The segment covering Pro136–Asp180 has biased composition (basic and acidic residues).

Its function is as follows. Appears to contribute to D.radiodurans capacity to survive exposure to ionizing radiation. May play a role in DNA repair and genome reconstitution. This chain is DNA damage response protein D (ddrD), found in Deinococcus radiodurans (strain ATCC 13939 / DSM 20539 / JCM 16871 / CCUG 27074 / LMG 4051 / NBRC 15346 / NCIMB 9279 / VKM B-1422 / R1).